We begin with the raw amino-acid sequence, 138 residues long: Phospholipase A2 crotoxin basic chain CBa2 (138 aa).

The first 16 residues, 1 to 16 (MRALWIVAVLLVGVEG), serve as a signal peptide directing secretion. Disulfide bonds link cysteine 42–cysteine 131, cysteine 44–cysteine 60, cysteine 59–cysteine 111, cysteine 65–cysteine 138, cysteine 66–cysteine 104, cysteine 73–cysteine 97, and cysteine 91–cysteine 102. Ca(2+) contacts are provided by tyrosine 43, glycine 45, and glycine 47. Histidine 63 is an active-site residue. Aspartate 64 is a binding site for Ca(2+). Aspartate 105 is an active-site residue.

Belongs to the phospholipase A2 family. Group II subfamily. D49 sub-subfamily. In terms of assembly, heterodimer of one of the acidic (CA1, CA2, CA3 or CA4) and one of the basic (CBa1, CBa2, CBb, CBc or CBd) subunits; non-covalently linked. The acidic subunit is non-toxic, without enzymatic activity and comprises 3 peptides that are cross-linked by 5 disulfide bridges. The basic subunit is toxic, has phospholipase A2 activity and is composed of a single chain. Multiple variants of each subunit give different crotoxin complexes that can be subdivided into 2 classes: (1) those of high toxicity, low PLA2 activity (CBb, CBc and CBd linked with high affinity to any CA) and high stability (K(d)=4.5 nM) and (2) those of moderate toxicity, high PLA2 activity (CBa2 linked with low affinity to any CA) and low stability (K(d)=25 nM). Interacts with human NBD1 domain of CFTR. The cofactor is Ca(2+). As to expression, expressed by the venom gland.

It localises to the secreted. It catalyses the reaction a 1,2-diacyl-sn-glycero-3-phosphocholine + H2O = a 1-acyl-sn-glycero-3-phosphocholine + a fatty acid + H(+). Functionally, heterodimer CA-CB: Crotoxin is a potent presynaptic neurotoxin that possesses phospholipase A2 (PLA2) activity and exerts a lethal action by blocking neuromuscular transmission. It consists of a non-covalent association of a basic and weakly toxic PLA2 subunit (CBa2, CBb, CBc, or CBd), with a small acidic, non-enzymatic and non-toxic subunit (CA1, CA2, CA3 or CA4). The complex acts by binding to a specific 48-kDa protein (R48) receptor located on presynaptic membranes, forming a transient ternary complex CA-CB-R48, followed by dissociation of the CA-CB complex and release of the CA subunit. At equilibrium, only the CB subunits remain associated with the specific crotoxin receptor. In addition to neurotoxicity, crotoxin has been found to exert myotoxicity, nephrotoxicity, and cardiovascular toxicity. Moreover, anti-inflammatory, immunomodulatory, anti-tumor and analgesic effects of crotoxin have also been reported. Its function is as follows. Monomer CBa2: The basic subunit of crotoxin is a snake venom phospholipase A2 (PLA2) that exhibits weak neurotoxicity (10-fold less than the heterodimer) and strong anticoagulant effects by binding to factor Xa (F10) and inhibiting the prothrombinase activity (IC(50) is 41 nM). In addition, it shows the same effects described for the heterodimer and binds the nucleotide-binding domain (NBD1) of CFTR chloride channels and increases the channel current. PLA2 catalyzes the calcium-dependent hydrolysis of the 2-acyl groups in 3-sn-phosphoglycerides. The chain is Phospholipase A2 crotoxin basic chain CBa2 from Crotalus durissus terrificus (South American rattlesnake).